Consider the following 445-residue polypeptide: FAS-associated factor 2 (445 aa).

Alanine 2 bears the N-acetylalanine mark. One can recognise a UBA domain in the interval 12–48 (EQTEKLLQFQDLTGIESMDQCRHTLEQHNWNIEAAVQ). Lysine 167 carries the N6-acetyllysine modification. Residues 275-350 (SERLEREERN…EEKERKLECL (76 aa)) are a coiled coil. Positions 299 to 361 (ASLRADQEKE…PEPSPDDPES (63 aa)) are disordered. The segment covering 303–348 (ADQEKERKKREERERKRRKEEEVQQQKLAEERRRQNLQEEKERKLE) has biased composition (basic and acidic residues). The region spanning 357 to 439 (DDPESVKIIF…GLSHTEVLFV (83 aa)) is the UBX domain.

In terms of assembly, identified in a complex that contains SEL1L, OS9, FAF2/UBXD8, UBE2J1/UBC6E and AUP1. Interacts with YOD1. Interacts (via N-terminus) with UBQLN2 (via C-terminus). Interacts with PNPLA2 and UBAC2. Interacts with ZFAND2B; probably through VCP. Interacts with LMBR1L. In terms of tissue distribution, broadly expressed, with highest levels in brain.

Its subcellular location is the cytoplasm. It localises to the lipid droplet. The protein localises to the endoplasmic reticulum. Plays an important role in endoplasmic reticulum-associated degradation (ERAD) that mediates ubiquitin-dependent degradation of misfolded endoplasmic reticulum proteins. By controlling the steady-state expression of the IGF1R receptor, indirectly regulates the insulin-like growth factor receptor signaling pathway. Involved in inhibition of lipid droplet degradation by binding to phospholipase PNPL2 and inhibiting its activity by promoting dissociation of PNPL2 from its endogenous activator, ABHD5 which inhibits the rate of triacylglycerol hydrolysis. Involved in stress granule disassembly: associates with ubiquitinated G3BP1 in response to heat shock, thereby promoting interaction between ubiquitinated G3BP1 and VCP, followed by G3BP1 extraction from stress granules and stress granule disassembly. The protein is FAS-associated factor 2 of Homo sapiens (Human).